Here is a 339-residue protein sequence, read N- to C-terminus: Dihydroorotate dehydrogenase (quinone) (339 aa).

FMN contacts are provided by residues 62–66 (AGMDK) and Thr-86. Position 66 (Lys-66) interacts with substrate. 111–115 (NRMGF) provides a ligand contact to substrate. Residues Asn-139 and Asn-172 each contribute to the FMN site. Asn-172 lines the substrate pocket. Ser-175 serves as the catalytic Nucleophile. Substrate is bound at residue Asn-177. Residues Lys-217 and Thr-245 each contribute to the FMN site. A substrate-binding site is contributed by 246 to 247 (NT). FMN-binding positions include Gly-268, Gly-297, and 318-319 (YS).

It belongs to the dihydroorotate dehydrogenase family. Type 2 subfamily. In terms of assembly, monomer. It depends on FMN as a cofactor.

The protein resides in the cell membrane. It catalyses the reaction (S)-dihydroorotate + a quinone = orotate + a quinol. The protein operates within pyrimidine metabolism; UMP biosynthesis via de novo pathway; orotate from (S)-dihydroorotate (quinone route): step 1/1. Its function is as follows. Catalyzes the conversion of dihydroorotate to orotate with quinone as electron acceptor. This chain is Dihydroorotate dehydrogenase (quinone), found in Shewanella putrefaciens (strain CN-32 / ATCC BAA-453).